The chain runs to 205 residues: Outer-membrane lipoprotein LolB (205 aa).

Residues 1-17 (MRLRLFLAASALALLSG) form the signal peptide. C18 is lipidated: N-palmitoyl cysteine. C18 carries the S-diacylglycerol cysteine lipid modification.

Belongs to the LolB family. Monomer.

It is found in the cell outer membrane. Functionally, plays a critical role in the incorporation of lipoproteins in the outer membrane after they are released by the LolA protein. In Pseudomonas aeruginosa (strain LESB58), this protein is Outer-membrane lipoprotein LolB.